Consider the following 634-residue polypeptide: MNYVASNIQVLKGLEAVRKRPGMYIGSVSINGLHHLVYEVVDNSIDEALAGFCDRIDVIINLDNTITVIDNGRGIPTDIHEEEGISALELVLTKLHSGGKFNKGTYKVSGGLHGVGISVVNALSSFLEVYVNRDGKIFRQTFSKGIPTSKVEVVGESSVTGTKVTFLADSEIFETLDYNFDVLEKRLKELAFLNDKIYISIEDKRIGKEKSSKFYFEGGIKSFVDYLTNDSKAFQSEPYYIDGFINDVIVNVGLKWTESYSDNILSFVNNINTREGGTHVMGFRSGLTKAMNEAFKNSKISKKDIPNLTGDDFKEGLTAVISVKVPEPQFEGQTKSKLGNSEIRKIVEVVVYEHLLEIINLNPLEIDTILGKAIKAARAREAARKARESERKKNAFESLALPGKLADCTSKNPLEREIYIVEGDSAGGSAKMGRNRFFQAILPLWGKMLNVEKTREDKVITNDKLIPIIASLGAGVGKTFDITKLRYHKIIIMADADVDGSHIRTLLLAFFFRYMRDLIENGYIYIAMPPLYKIKYDNRIYYFYEEKEKEKFLDSIETKNRNSISLQRYKGLGEMNPTQLWETTMDPARRKMRLMNIDDAIEAEKIFVTLMGDLVEPRKEFIEQNALNVINLDV.

Positions 416 to 530 (REIYIVEGDS…NGYIYIAMPP (115 aa)) constitute a Toprim domain. Glu422, Asp495, and Asp497 together coordinate Mg(2+).

It belongs to the type II topoisomerase GyrB family. Heterotetramer, composed of two GyrA and two GyrB chains. In the heterotetramer, GyrA contains the active site tyrosine that forms a transient covalent intermediate with DNA, while GyrB binds cofactors and catalyzes ATP hydrolysis. The cofactor is Mg(2+). It depends on Mn(2+) as a cofactor. Ca(2+) is required as a cofactor.

It localises to the cytoplasm. The enzyme catalyses ATP-dependent breakage, passage and rejoining of double-stranded DNA.. A type II topoisomerase that negatively supercoils closed circular double-stranded (ds) DNA in an ATP-dependent manner to modulate DNA topology and maintain chromosomes in an underwound state. Negative supercoiling favors strand separation, and DNA replication, transcription, recombination and repair, all of which involve strand separation. Also able to catalyze the interconversion of other topological isomers of dsDNA rings, including catenanes and knotted rings. Type II topoisomerases break and join 2 DNA strands simultaneously in an ATP-dependent manner. The polypeptide is DNA gyrase subunit B (Borreliella burgdorferi (strain ATCC 35210 / DSM 4680 / CIP 102532 / B31) (Borrelia burgdorferi)).